A 366-amino-acid polypeptide reads, in one-letter code: Terpene synthase 4 (366 aa).

A DDxx(x)D/E motif motif is present at residues 91-96; the sequence is DDFLER. The NDxxSxxxD/E motif motif lies at 241–249; that stretch reads NDCVSYAKE.

This sequence belongs to the terpene synthase family.

It carries out the reaction (2E,6E)-farnesyl diphosphate = (1S,2S,4R)-beta-elemene + diphosphate. Its function is as follows. Terpene synthase that converts its substrate farnesyl diphosphate (FPP) into the sesquiterpenes bicycloelemene, beta-elemene and 2 yet unidentified sesquiterpenes. The chain is Terpene synthase 4 from Dictyostelium purpureum (Slime mold).